A 386-amino-acid polypeptide reads, in one-letter code: S-adenosylmethionine synthase (386 aa).

An ATP-binding site is contributed by H16. Residue D18 coordinates Mg(2+). E44 contributes to the K(+) binding site. The L-methionine site is built by E57 and Q100. The flexible loop stretch occupies residues 100-110 (QSRDITQGVDR). ATP-binding positions include 165-167 (DAK), D240, 246-247 (RK), A263, and K267. D240 contacts L-methionine. K271 is a binding site for L-methionine.

It belongs to the AdoMet synthase family. As to quaternary structure, homotetramer; dimer of dimers. Requires Mg(2+) as cofactor. It depends on K(+) as a cofactor.

It localises to the cytoplasm. The enzyme catalyses L-methionine + ATP + H2O = S-adenosyl-L-methionine + phosphate + diphosphate. It participates in amino-acid biosynthesis; S-adenosyl-L-methionine biosynthesis; S-adenosyl-L-methionine from L-methionine: step 1/1. Functionally, catalyzes the formation of S-adenosylmethionine (AdoMet) from methionine and ATP. The overall synthetic reaction is composed of two sequential steps, AdoMet formation and the subsequent tripolyphosphate hydrolysis which occurs prior to release of AdoMet from the enzyme. The chain is S-adenosylmethionine synthase from Francisella tularensis subsp. tularensis (strain FSC 198).